The following is a 561-amino-acid chain: Ribulokinase (561 aa).

It belongs to the ribulokinase family.

The enzyme catalyses D-ribulose + ATP = D-ribulose 5-phosphate + ADP + H(+). The catalysed reaction is L-ribulose + ATP = L-ribulose 5-phosphate + ADP + H(+). The protein operates within carbohydrate degradation; L-arabinose degradation via L-ribulose; D-xylulose 5-phosphate from L-arabinose (bacterial route): step 2/3. This chain is Ribulokinase, found in Shouchella clausii (strain KSM-K16) (Alkalihalobacillus clausii).